We begin with the raw amino-acid sequence, 226 residues long: MSILVVTGTGTGIGKTVVTAALACHARLAGLDVAVCKPIQTGTRDGDDDLAVVARLAGVEDLHSLAKFPEPLAPLAAAHRAGADLPSRAALDDLIAAVDRPGRLTLVEGAGGLLVEIGRGGVTLRDLAEDLRAPVLTVVAPGLGTLNHTVLTLEALAHRDVRSEGLVIGSWPAQPGVAEIDNRDALARLGPVRAALPAGAGTLSGTDFERLSVQAFDEAWVRGLVG.

12–17 (GIGKTV) contributes to the ATP binding site. Position 16 (Thr16) interacts with Mg(2+). Lys37 is a catalytic residue. Thr41 contacts substrate. ATP is bound by residues Asp49, 108–111 (EGAG), 169–170 (GS), and 197–199 (PAG). Mg(2+) contacts are provided by Asp49 and Glu108.

Belongs to the dethiobiotin synthetase family. Homodimer. Mg(2+) serves as cofactor.

The protein resides in the cytoplasm. It catalyses the reaction (7R,8S)-7,8-diammoniononanoate + CO2 + ATP = (4R,5S)-dethiobiotin + ADP + phosphate + 3 H(+). It functions in the pathway cofactor biosynthesis; biotin biosynthesis; biotin from 7,8-diaminononanoate: step 1/2. In terms of biological role, catalyzes a mechanistically unusual reaction, the ATP-dependent insertion of CO2 between the N7 and N8 nitrogen atoms of 7,8-diaminopelargonic acid (DAPA, also called 7,8-diammoniononanoate) to form a ureido ring. The polypeptide is ATP-dependent dethiobiotin synthetase BioD (Mycolicibacterium gilvum (strain PYR-GCK) (Mycobacterium gilvum (strain PYR-GCK))).